The primary structure comprises 159 residues: Ribosomal RNA large subunit methyltransferase H (159 aa).

Positions 76 and 108 each coordinate S-adenosyl-L-methionine.

Belongs to the RNA methyltransferase RlmH family. As to quaternary structure, homodimer.

It is found in the cytoplasm. The enzyme catalyses pseudouridine(1915) in 23S rRNA + S-adenosyl-L-methionine = N(3)-methylpseudouridine(1915) in 23S rRNA + S-adenosyl-L-homocysteine + H(+). In terms of biological role, specifically methylates the pseudouridine at position 1915 (m3Psi1915) in 23S rRNA. This Limosilactobacillus fermentum (strain NBRC 3956 / LMG 18251) (Lactobacillus fermentum) protein is Ribosomal RNA large subunit methyltransferase H.